Reading from the N-terminus, the 238-residue chain is dITP/XTP pyrophosphatase (238 aa).

Substrate is bound at residue 7 to 12 (SANQHK). The active-site Proton acceptor is the aspartate 89. Aspartate 89 is a binding site for Mg(2+). Residues serine 90, 191–194 (FGYD), lysine 217, and 222–223 (HR) each bind substrate.

It belongs to the HAM1 NTPase family. Homodimer. Mg(2+) is required as a cofactor.

It catalyses the reaction XTP + H2O = XMP + diphosphate + H(+). It carries out the reaction dITP + H2O = dIMP + diphosphate + H(+). The catalysed reaction is ITP + H2O = IMP + diphosphate + H(+). Pyrophosphatase that catalyzes the hydrolysis of nucleoside triphosphates to their monophosphate derivatives, with a high preference for the non-canonical purine nucleotides XTP (xanthosine triphosphate), dITP (deoxyinosine triphosphate) and ITP. Seems to function as a house-cleaning enzyme that removes non-canonical purine nucleotides from the nucleotide pool, thus preventing their incorporation into DNA/RNA and avoiding chromosomal lesions. This is dITP/XTP pyrophosphatase from Helicobacter hepaticus (strain ATCC 51449 / 3B1).